Reading from the N-terminus, the 261-residue chain is Carbonic anhydrase 1 (261 aa).

A2 carries the N-acetylalanine modification. Residues 4–261 enclose the Alpha-carbonic anhydrase domain; sequence PDWGYDDKNG…LKGRTVRASF (258 aa). H65 (proton donor/acceptor) is an active-site residue. Zn(2+)-binding residues include H95, H97, and H120. Substrate is bound by residues T200 and 200–201; that span reads TH. The tract at residues 238 to 261 is disordered; that stretch reads NPVPIQRNNRPTQPLKGRTVRASF.

This sequence belongs to the alpha-carbonic anhydrase family. The cofactor is Zn(2+).

The protein resides in the cytoplasm. The enzyme catalyses hydrogencarbonate + H(+) = CO2 + H2O. It carries out the reaction urea = cyanamide + H2O. With respect to regulation, inhibited by acetazolamide. Functionally, catalyzes the reversible hydration of carbon dioxide. Can hydrate cyanamide to urea. The chain is Carbonic anhydrase 1 (CA1) from Macaca mulatta (Rhesus macaque).